Consider the following 211-residue polypeptide: Small ribosomal subunit protein uS3 (211 aa).

The 70-residue stretch at 16–85 (IDEYFKGKLV…NPQIEVKPLE (70 aa)) folds into the KH type-2 domain.

It belongs to the universal ribosomal protein uS3 family. As to quaternary structure, part of the 30S ribosomal subunit.

In terms of biological role, binds the lower part of the 30S subunit head. The polypeptide is Small ribosomal subunit protein uS3 (Methanococcus vannielii (strain ATCC 35089 / DSM 1224 / JCM 13029 / OCM 148 / SB)).